The following is a 361-amino-acid chain: Alanine racemase (361 aa).

K35 acts as the Proton acceptor; specific for D-alanine in catalysis. K35 bears the N6-(pyridoxal phosphate)lysine mark. A substrate-binding site is contributed by R130. Y257 functions as the Proton acceptor; specific for L-alanine in the catalytic mechanism. Substrate is bound at residue M305.

This sequence belongs to the alanine racemase family. Pyridoxal 5'-phosphate is required as a cofactor.

The catalysed reaction is L-alanine = D-alanine. The protein operates within amino-acid biosynthesis; D-alanine biosynthesis; D-alanine from L-alanine: step 1/1. Catalyzes the interconversion of L-alanine and D-alanine. May also act on other amino acids. This chain is Alanine racemase (alr), found in Nitrosomonas eutropha (strain DSM 101675 / C91 / Nm57).